Consider the following 903-residue polypeptide: Protein translocase subunit SecA (903 aa).

ATP is bound by residues glutamine 87, glycine 105–threonine 109, and aspartate 513. Residues methionine 840–arginine 853 show a composition bias toward basic and acidic residues. A disordered region spans residues methionine 840 to asparagine 903. Zn(2+)-binding residues include cysteine 887, cysteine 889, cysteine 898, and histidine 899.

The protein belongs to the SecA family. Monomer and homodimer. Part of the essential Sec protein translocation apparatus which comprises SecA, SecYEG and auxiliary proteins SecDF-YajC and YidC. Zn(2+) is required as a cofactor.

Its subcellular location is the cell inner membrane. It is found in the cytoplasm. The enzyme catalyses ATP + H2O + cellular proteinSide 1 = ADP + phosphate + cellular proteinSide 2.. Functionally, part of the Sec protein translocase complex. Interacts with the SecYEG preprotein conducting channel. Has a central role in coupling the hydrolysis of ATP to the transfer of proteins into and across the cell membrane, serving both as a receptor for the preprotein-SecB complex and as an ATP-driven molecular motor driving the stepwise translocation of polypeptide chains across the membrane. The chain is Protein translocase subunit SecA from Vibrio cholerae serotype O1 (strain M66-2).